The following is a 377-amino-acid chain: DNA dC-&gt;dU-editing enzyme APOBEC-3G (377 aa).

An essential for cytoplasmic localization region spans residues 1–60 (MNPQIRNMVEQMEPDIFVYYFNNRPILSGRNTVWLCYEVKTKDPSGPPLDANIFQGKLYP). 2 CMP/dCMP-type deaminase domains span residues 29–138 (GRNT…LRIL) and 214–327 (GQRE…LRTL). Position 32 is a phosphothreonine; by PKA (T32). Zn(2+) contacts are provided by H65, C97, and C100. Residues 209–335 (KPWVSGQRET…TLHRDGAKIA (127 aa)) form a necessary for homooligomerization region. The interaction with DNA stretch occupies residues 213–215 (SGQ). At T218 the chain carries Phosphothreonine; by PKA and CAMK2. H257 lines the Zn(2+) pocket. E259 (proton donor) is an active-site residue. Positions 287 and 290 each coordinate Zn(2+). The interaction with DNA stretch occupies residues 312 to 319 (RIYDDQGR).

It belongs to the cytidine and deoxycytidylate deaminase family. In terms of assembly, homodimer. Homooligomer. Can bind RNA to form ribonucleoprotein complexes of high-molecular-mass (HMM) or low-molecular-mass (LMM). HMM is inactive and heterogeneous in protein composition because of binding nonselectively to cellular RNAs, which in turn are associated with variety of cellular proteins. The LMM form which is enzymatically active has few or no RNAs associated. Its ability to form homooligomer is distinct from its ability to assemble into HMM. Interacts with APOBEC3B, APOBEC3F, MOV10, AGO2, EIF4E, EIF4ENIF1, DCP2 and DDX6 in an RNA-dependent manner. Interacts with AGO1, AGO3 and PKA/PRKACA. Zn(2+) serves as cofactor.

It is found in the cytoplasm. The protein resides in the nucleus. The protein localises to the P-body. It catalyses the reaction a 2'-deoxycytidine in single-stranded DNA + H2O + H(+) = a 2'-deoxyuridine in single-stranded DNA + NH4(+). Functionally, DNA deaminase (cytidine deaminase) which acts as an inhibitor of retrovirus replication and retrotransposon mobility via deaminase-dependent and -independent mechanisms. Exhibits antiviral activity against vif-deficient: HIV-1 and simian immunodeficiency viruses (SIVs) and also simian foamy virus (SFV). After the penetration of retroviral nucleocapsids into target cells of infection and the initiation of reverse transcription, it can induce the conversion of cytosine to uracil in the minus-sense single-strand viral DNA, leading to G-to-A hypermutations in the subsequent plus-strand viral DNA. The resultant detrimental levels of mutations in the proviral genome, along with a deamination-independent mechanism that works prior to the proviral integration, together exert efficient antiretroviral effects in infected target cells. Selectively targets single-stranded DNA and does not deaminate double-stranded DNA or single- or double-stranded RNA. May inhibit the mobility of LTR retrotransposons. The polypeptide is DNA dC-&gt;dU-editing enzyme APOBEC-3G (APOBEC3G) (Chlorocebus aethiops (Green monkey)).